Reading from the N-terminus, the 485-residue chain is Forkhead box protein N3 (485 aa).

Disordered stretches follow at residues 1 to 54 (MGPV…KGGM) and 85 to 108 (PVQDIDDDTPPSPAQSDMPYDAKQ). The span at 16–30 (ISVSSQCYRSSTLSN) shows a compositional bias: polar residues. The fork-head DNA-binding region spans 113-209 (KPPYSFSCLI…QALKKTPYHP (97 aa)). Disordered regions lie at residues 316 to 357 (MESE…ISSS) and 401 to 449 (PLVE…MKEA). Over residues 338–357 (SSAKSANKRSSSPSDSISSS) the composition is skewed to low complexity. Residues 410-422 (QHKKKQHLLKLRR) show a composition bias toward basic residues.

At early cleavage stages, localized within the animal half of the embryo. At gastrulation, expression expands over the whole embryo excluding the future endodermal cells of the blastopore. During neurulation, expressed in the prospective eye field and in the neural crest cells. Strongly enriched in the eye vesicles at stage 26. From stage 29 onwards, expressed predominantly in the eye, the branchial arches and the vagal ganglion. At stage 38, expressed throughout the head with strongest expression in the head mesenchyme and the eye lens.

It localises to the nucleus. Its function is as follows. Acts as a transcriptional repressor. May be involved in DNA damage-inducible cell cycle arrests (checkpoints). The protein is Forkhead box protein N3 of Xenopus laevis (African clawed frog).